We begin with the raw amino-acid sequence, 346 residues long: Haptoglobin-related protein (346 aa).

Residues 1–16 (DLGAVIYLLLWGRQLF) constitute a signal peptide (not cleaved). The Sushi domain maps to 32–85 (FPKPPEIANGYVEHLFRYQRKNYYRLRTEGDGVYTLNDKKQWINKAVGDKLPEC). Residues 102-344 (ILGGHLDAKG…IHVWVQKTIA (243 aa)) form the Peptidase S1 domain. 2 disulfides stabilise this stretch: Cys249/Cys280 and Cys291/Cys321.

It belongs to the peptidase S1 family.

Its subcellular location is the secreted. Primate-specific plasma protein associated with apolipoprotein L-I (apoL-I)-containing high-density lipoprotein (HDL). Binds hemoglobin with high affinity and may contribute to the clearance of cell-free hemoglobin to allow hepatic recycling of heme iron. This Pan troglodytes (Chimpanzee) protein is Haptoglobin-related protein (HPR).